A 380-amino-acid chain; its full sequence is Ceramide synthase 2 (380 aa).

The Lumenal segment spans residues 1 to 40 (MLQTLYDYFWWERLWLPVNLTWADLEDRDGRVYAKASDLY). N19 carries an N-linked (GlcNAc...) asparagine glycan. The helical transmembrane segment at 41–61 (ITLPLALLFLIVRYFFELYVA) threads the bilayer. Positions 67-128 (LLNIKEKTRL…RRRRNQDRPS (62 aa)) are homeobox-like. Positions 131–332 (KKFREASWRF…ILRMAHKFIT (202 aa)) constitute a TLC domain. The next 4 membrane-spanning stretches (helical) occupy residues 140-160 (FTFYLIAFIAGMAVIVDKPWF), 181-201 (WYYMIELSFYWSLLFSIASDV), 209-229 (QIIHHVATIILISFSWFANYI), and 264-284 (IFIVFAIVFIITRLVILPFWI). The Last loop motif signature appears at 291 to 300 (YPLELYPAFF). The chain crosses the membrane as a helical span at residues 304 to 324 (FFNSMMGVLQLLHIFWAYLIL). The Cytoplasmic segment spans residues 325–380 (RMAHKFITGKLVEDERSDREETESSEGEEAAAGGGAKSRPLANGHPILNNNHRKND). The interval 338–380 (DERSDREETESSEGEEAAAGGGAKSRPLANGHPILNNNHRKND) is disordered. Phosphoserine is present on S341. Over residues 344 to 353 (EETESSEGEE) the composition is skewed to acidic residues. Position 346 is a phosphothreonine (T346). S348 and S349 each carry phosphoserine.

In terms of assembly, interacts with ATP6V0C, ASGR1, ASGR2 and SLC22A1/OCT1. Interacts with ELOV1, HSD17B12 and TECR. Interacts with NDUFS2. Interacts with PAQR4; the interaction regulates the stability and activity of CERS2 and is inhibited in presence of ceramides. In terms of processing, acetylated. Deacetylation by SIRT3 increases enzyme activity and promotes mitochondrial ceramide accumulation. Post-translationally, phosphorylated at the C-terminus by CK2, leading to increase the ceramide synthase activity. In terms of tissue distribution, expressed in kidney, liver, brain, heart, placenta and lung.

It is found in the endoplasmic reticulum membrane. It catalyses the reaction a very long-chain fatty acyl-CoA + a sphingoid base = an N-(very-long-chain fatty acyl)-sphingoid base + CoA + H(+). The enzyme catalyses docosanoyl-CoA + sphinganine = N-docosanoylsphinganine + CoA + H(+). The catalysed reaction is tetracosanoyl-CoA + sphinganine = N-tetracosanoylsphinganine + CoA + H(+). It carries out the reaction hexacosanoyl-CoA + sphinganine = N-hexacosanoylsphinganine + CoA + H(+). It catalyses the reaction (15Z)-tetracosenoyl-CoA + sphinganine = N-(15Z-tetracosenoyl)-sphinganine + CoA + H(+). The enzyme catalyses 2-hydroxytetracosanoyl-CoA + sphinganine = N-(2-hydroxytetracosanoyl)-sphinganine + CoA + H(+). The catalysed reaction is 2-hydroxydocosanoyl-CoA + sphinganine = N-(2-hydroxydocosanoyl)-sphinganine + CoA + H(+). It carries out the reaction 2-hydroxytetracosenoyl-CoA + sphinganine = N-(2-hydroxytetracosenoyl)-sphinganine + CoA + H(+). It catalyses the reaction tetracosenoyl-CoA + sphinganine = an N-tetracosenoylsphinganine + CoA + H(+). The enzyme catalyses hexacosenoyl-CoA + sphinganine = N-hexacosenoylsphinganine + CoA + H(+). The catalysed reaction is tetracosanoyl-CoA + sphing-4-enine = N-tetracosanoyl-sphing-4-enine + CoA + H(+). It carries out the reaction tetracosenoyl-CoA + sphing-4-enine = N-(tetracosenoyl)-sphing-4-enine + CoA + H(+). It catalyses the reaction heptadecasphing-4-enine + tetracosanoyl-CoA = N-tetracosanoyl-heptadecasphing-4-enine + CoA + H(+). The enzyme catalyses a fatty acyl-CoA + sphing-4-enine = an N-acylsphing-4-enine + CoA + H(+). The catalysed reaction is sphing-4-enine + hexadecanoyl-CoA = N-hexadecanoylsphing-4-enine + CoA + H(+). It carries out the reaction sphing-4-enine + octadecanoyl-CoA = N-octadecanoylsphing-4-enine + CoA + H(+). It catalyses the reaction eicosanoyl-CoA + sphing-4-enine = N-eicosanoyl-sphing-4-enine + CoA + H(+). The enzyme catalyses sphinganine + hexadecanoyl-CoA = N-hexadecanoylsphinganine + CoA + H(+). The catalysed reaction is sphinganine + octadecanoyl-CoA = N-(octadecanoyl)-sphinganine + CoA + H(+). It carries out the reaction sphinganine + (9Z)-octadecenoyl-CoA = N-(9Z-octadecenoyl)-sphinganine + CoA + H(+). It catalyses the reaction eicosanoyl-CoA + sphinganine = N-eicosanoylsphinganine + CoA + H(+). Its pathway is lipid metabolism; sphingolipid metabolism. With respect to regulation, ceramide synthase activity is inhibited by sphingosine-1-phosphate. In terms of biological role, ceramide synthase that catalyzes the transfer of the acyl chain from acyl-CoA to a sphingoid base, with high selectivity toward very-long-chain fatty acyl-CoA (chain length C22-C27). N-acylates sphinganine and sphingosine bases to form dihydroceramides and ceramides in de novo synthesis and salvage pathways, respectively. Plays a non-redundant role in the synthesis of ceramides with very-long-chain fatty acids in kidney, liver and brain. Regulates the abundance of myelin-specific sphingolipids galactosylceramide and sulfatide that affects myelin sheath architecture and motor neuron functions. The chain is Ceramide synthase 2 from Homo sapiens (Human).